Consider the following 334-residue polypeptide: Phosphate acyltransferase (334 aa).

The protein belongs to the PlsX family. Homodimer. Probably interacts with PlsY.

Its subcellular location is the cytoplasm. The catalysed reaction is a fatty acyl-[ACP] + phosphate = an acyl phosphate + holo-[ACP]. The protein operates within lipid metabolism; phospholipid metabolism. Its function is as follows. Catalyzes the reversible formation of acyl-phosphate (acyl-PO(4)) from acyl-[acyl-carrier-protein] (acyl-ACP). This enzyme utilizes acyl-ACP as fatty acyl donor, but not acyl-CoA. In Mycoplasma capricolum subsp. capricolum (strain California kid / ATCC 27343 / NCTC 10154), this protein is Phosphate acyltransferase.